The primary structure comprises 199 residues: Octanoyltransferase (199 aa).

The region spanning 27 to 199 (SNSCDELWLL…FVQYFLTQFK (173 aa)) is the BPL/LPL catalytic domain. Substrate contacts are provided by residues 66–73 (RGGQVTYH), 133–135 (SIG), and 146–148 (GIA). Cys164 (acyl-thioester intermediate) is an active-site residue.

This sequence belongs to the LipB family.

It is found in the cytoplasm. It carries out the reaction octanoyl-[ACP] + L-lysyl-[protein] = N(6)-octanoyl-L-lysyl-[protein] + holo-[ACP] + H(+). Its pathway is protein modification; protein lipoylation via endogenous pathway; protein N(6)-(lipoyl)lysine from octanoyl-[acyl-carrier-protein]: step 1/2. In terms of biological role, catalyzes the transfer of endogenously produced octanoic acid from octanoyl-acyl-carrier-protein onto the lipoyl domains of lipoate-dependent enzymes. Lipoyl-ACP can also act as a substrate although octanoyl-ACP is likely to be the physiological substrate. This chain is Octanoyltransferase, found in Legionella pneumophila (strain Paris).